Reading from the N-terminus, the 228-residue chain is Orotate phosphoribosyltransferase (228 aa).

Lysine 26 contacts 5-phospho-alpha-D-ribose 1-diphosphate. Residue 34–35 (FF) coordinates orotate. 5-phospho-alpha-D-ribose 1-diphosphate contacts are provided by residues 72–73 (YK), arginine 98, lysine 99, lysine 102, histidine 104, and 123–131 (DDVISAGTS). The orotate site is built by serine 127 and arginine 155.

The protein belongs to the purine/pyrimidine phosphoribosyltransferase family. PyrE subfamily. Homodimer. Mg(2+) serves as cofactor.

The catalysed reaction is orotidine 5'-phosphate + diphosphate = orotate + 5-phospho-alpha-D-ribose 1-diphosphate. The protein operates within pyrimidine metabolism; UMP biosynthesis via de novo pathway; UMP from orotate: step 1/2. Its function is as follows. Catalyzes the transfer of a ribosyl phosphate group from 5-phosphoribose 1-diphosphate to orotate, leading to the formation of orotidine monophosphate (OMP). This chain is Orotate phosphoribosyltransferase, found in Nitrosospira multiformis (strain ATCC 25196 / NCIMB 11849 / C 71).